The primary structure comprises 314 residues: Zinc transporter ZIP3 (314 aa).

Residues 1-3 (MVK) lie on the Extracellular side of the membrane. A helical transmembrane segment spans residues 4-24 (LLVAKILCMVGMFFFMLLGSL). The Cytoplasmic segment spans residues 25–42 (LPVKIIEMDFEKAHRSKK). Residues 43–63 (ILSLCNTFGGGVFLATCFNAL) form a helical membrane-spanning segment. The Extracellular segment spans residues 64–85 (LPAVREKLKEVLTLAHISTDYP). A helical membrane pass occupies residues 86–106 (LAETIMLLGFFMTVFLEQLVL). The Cytoplasmic portion of the chain corresponds to 107 to 169 (TFRKERPAFI…QELSRSSPLR (63 aa)). Phosphoserine is present on residues serine 125 and serine 129. The chain crosses the membrane as a helical span at residues 170–190 (LLSLVFALSAHSVFEGLALGL). Residues 191–196 (QEEGEK) are Extracellular-facing. Residues 197–217 (VVSLFVGVAIHETLVAVALGI) form a helical membrane-spanning segment. Over 218-229 (NMARSAMALRDA) the chain is Cytoplasmic. Residues 230–250 (AKLAVTVSAMIPLGISLGLGI) traverse the membrane as a helical segment. Residues 251–262 (DSAQGMPSSVAS) lie on the Extracellular side of the membrane. A helical transmembrane segment spans residues 263 to 283 (VLLQGLAGGTFLFVTFFEILA). Topologically, residues 284–292 (KELEEKSDR) are cytoplasmic. Residues 293–313 (LLKVLFLVLGYTVLAGMVFIK) traverse the membrane as a helical segment. Position 314 (tryptophan 314) is a topological domain, extracellular.

This sequence belongs to the ZIP transporter (TC 2.A.5) family.

The protein resides in the cell membrane. Its subcellular location is the apical cell membrane. It carries out the reaction Zn(2+)(in) = Zn(2+)(out). In terms of biological role, transporter for the divalent cation Zn(2+). Mediates the influx of Zn(2+) into cells from extracellular space. Controls Zn(2+) accumulation into dentate gyrus granule cells in the hippocampus. Mediates Zn(2+) reuptake from the secreted milk within the alveolar lumen. The protein is Zinc transporter ZIP3 (SLC39A3) of Bos taurus (Bovine).